The primary structure comprises 196 residues: tRNA(Phe) 7-((3-amino-3-carboxypropyl)-4-demethylwyosine(37)-N(4))-methyltransferase 1 (196 aa).

It belongs to the TYW3 family.

It catalyses the reaction 4-demethyl-7-[(3S)-3-amino-3-carboxypropyl]wyosine(37) in tRNA(Phe) + S-adenosyl-L-methionine = 7-[(3S)-3-amino-3-carboxypropyl]wyosine(37) in tRNA(Phe) + S-adenosyl-L-homocysteine + H(+). S-adenosyl-L-methionine-dependent methyltransferase that acts as a component of the wyosine derivatives biosynthesis pathway. Probably methylates N-4 position of wybutosine-86 to produce wybutosine-72. The sequence is that of tRNA(Phe) 7-((3-amino-3-carboxypropyl)-4-demethylwyosine(37)-N(4))-methyltransferase 1 from Pyrococcus horikoshii (strain ATCC 700860 / DSM 12428 / JCM 9974 / NBRC 100139 / OT-3).